Consider the following 138-residue polypeptide: uncharacterized protein (138 aa).

The helical transmembrane segment at 19-40 (ECKVSVISFFLLAFLLMAHIWL) threads the bilayer. Tandem repeats lie at residues 94-106 (KGEI…KKEG), 107-119 (KGEI…KKEG), and 120-132 (KGEI…KKEV). Residues 94-132 (KGEIEGKEEKKEGKGEIEGKEEKKEGKGEIEGKEEKKEV) are 3 X 13 AA tandem repeats of K-G-E-I-E-G-K-E-E-K-K-E-[GV]. The interval 98-138 (EGKEEKKEGKGEIEGKEEKKEGKGEIEGKEEKKEVENGPRK) is disordered.

As to expression, expressed in roots, leaves and flowers.

The protein resides in the mitochondrion membrane. Involved in cytoplasmic male sterility (CMS) by leading to pollen abortion. Not expressed in fertile (normal) plants. This is an uncharacterized protein from Raphanus sativus (Radish).